A 474-amino-acid chain; its full sequence is 3-isopropylmalate dehydratase large subunit (474 aa).

[4Fe-4S] cluster-binding residues include Cys-353, Cys-414, and Cys-417.

This sequence belongs to the aconitase/IPM isomerase family. LeuC type 1 subfamily. As to quaternary structure, heterodimer of LeuC and LeuD. Requires [4Fe-4S] cluster as cofactor.

It catalyses the reaction (2R,3S)-3-isopropylmalate = (2S)-2-isopropylmalate. It participates in amino-acid biosynthesis; L-leucine biosynthesis; L-leucine from 3-methyl-2-oxobutanoate: step 2/4. Its function is as follows. Catalyzes the isomerization between 2-isopropylmalate and 3-isopropylmalate, via the formation of 2-isopropylmaleate. This Xylella fastidiosa (strain M12) protein is 3-isopropylmalate dehydratase large subunit.